Consider the following 88-residue polypeptide: Cell division topological specificity factor (88 aa).

This sequence belongs to the MinE family.

Prevents the cell division inhibition by proteins MinC and MinD at internal division sites while permitting inhibition at polar sites. This ensures cell division at the proper site by restricting the formation of a division septum at the midpoint of the long axis of the cell. The protein is Cell division topological specificity factor of Clostridium kluyveri (strain ATCC 8527 / DSM 555 / NBRC 12016 / NCIMB 10680 / K1).